The chain runs to 352 residues: Phosphoribosylformylglycinamidine cyclo-ligase (352 aa).

Belongs to the AIR synthase family.

It localises to the cytoplasm. The enzyme catalyses 2-formamido-N(1)-(5-O-phospho-beta-D-ribosyl)acetamidine + ATP = 5-amino-1-(5-phospho-beta-D-ribosyl)imidazole + ADP + phosphate + H(+). Its pathway is purine metabolism; IMP biosynthesis via de novo pathway; 5-amino-1-(5-phospho-D-ribosyl)imidazole from N(2)-formyl-N(1)-(5-phospho-D-ribosyl)glycinamide: step 2/2. This is Phosphoribosylformylglycinamidine cyclo-ligase from Ectopseudomonas mendocina (strain ymp) (Pseudomonas mendocina).